The following is a 202-amino-acid chain: MSVSGPLPRIPAEAGAALFTDARTAYSFADTPVDDATLTGIWELARWAPTAANTQPMRVLYVRTAEGKERLLPHLDEGNRPKSASAPVVAVLAVDHRFHEHLPHVLPVRPEMKEYFEGEPAQREAITSFNGPLQAGYFILAVRALGLAAGPMAGFDPAGIDKEFFADSDWHSILVVNIGHPAGPPAFDRMPRLAHEHALDWA.

It belongs to the nitroreductase family. HadB/RutE subfamily. FMN is required as a cofactor.

This chain is Putative NADH dehydrogenase/NAD(P)H nitroreductase SCO7141, found in Streptomyces coelicolor (strain ATCC BAA-471 / A3(2) / M145).